The following is a 340-amino-acid chain: Phosphoribosylformylglycinamidine cyclo-ligase (340 aa).

It belongs to the AIR synthase family.

It localises to the cytoplasm. The enzyme catalyses 2-formamido-N(1)-(5-O-phospho-beta-D-ribosyl)acetamidine + ATP = 5-amino-1-(5-phospho-beta-D-ribosyl)imidazole + ADP + phosphate + H(+). The protein operates within purine metabolism; IMP biosynthesis via de novo pathway; 5-amino-1-(5-phospho-D-ribosyl)imidazole from N(2)-formyl-N(1)-(5-phospho-D-ribosyl)glycinamide: step 2/2. The sequence is that of Phosphoribosylformylglycinamidine cyclo-ligase from Streptococcus pneumoniae (strain P1031).